We begin with the raw amino-acid sequence, 402 residues long: uncharacterized protein (402 aa).

A signal peptide spans 1–44 (MLEKNLLPEILLAIHMPLNKGLTRVKAIVIIIVVIIAVIAGVVG). The interval 53–79 (NSVTTSSSSTTTSSSLSSTSISSSTTN) is disordered.

This sequence belongs to the bacterial solute-binding protein 1 family. WtpA subfamily.

This is an uncharacterized protein from Saccharolobus solfataricus (strain ATCC 35092 / DSM 1617 / JCM 11322 / P2) (Sulfolobus solfataricus).